The primary structure comprises 224 residues: 7-cyano-7-deazaguanine synthase (224 aa).

10–20 (LSGGLDSATVV) lines the ATP pocket. The Zn(2+) site is built by Cys189, Cys199, Cys202, and Cys205.

This sequence belongs to the QueC family. Zn(2+) serves as cofactor.

It carries out the reaction 7-carboxy-7-deazaguanine + NH4(+) + ATP = 7-cyano-7-deazaguanine + ADP + phosphate + H2O + H(+). It participates in purine metabolism; 7-cyano-7-deazaguanine biosynthesis. In terms of biological role, catalyzes the ATP-dependent conversion of 7-carboxy-7-deazaguanine (CDG) to 7-cyano-7-deazaguanine (preQ(0)). The polypeptide is 7-cyano-7-deazaguanine synthase (Pseudomonas fluorescens (strain SBW25)).